A 1125-amino-acid polypeptide reads, in one-letter code: Speract receptor (1125 aa).

A signal peptide spans 1–21 (MAHARHLFLFMVAFTITMVIA). Residues 22 to 510 (RLDFNPTIIN…GELCTNWALY (489 aa)) lie on the Extracellular side of the membrane. N-linked (GlcNAc...) asparagine glycans are attached at residues Asn-185 and Asn-409. A helical transmembrane segment spans residues 511-531 (LGASIPTFLIIFGGLIGFFIY). Residues 532–1125 (RKRAYEAALD…AANRVIPDDV (594 aa)) are Cytoplasmic-facing. Residues 571 to 839 (MSAISVISNA…PNIMAVRTML (269 aa)) enclose the Protein kinase domain. The Guanylate cyclase domain maps to 914–1044 (SIFFSDIVGF…DTVNTASRME (131 aa)).

It belongs to the adenylyl cyclase class-4/guanylyl cyclase family.

The protein localises to the membrane. It carries out the reaction GTP = 3',5'-cyclic GMP + diphosphate. Implicated as a cell-surface receptor on spermatozoa for 'speract' a chemotactic peptide, and on various other cells as a receptor for atrial natriuretic peptide. The sequence is that of Speract receptor from Strongylocentrotus purpuratus (Purple sea urchin).